A 125-amino-acid polypeptide reads, in one-letter code: MRALLLLSLSALLCWVSADIRCHSCYKLPVLGCVDRKSCRLEPGQQCLTTHAYIGKMWVFSRLDCGTPGEPCKPAVNQTNQKGGLTYNTTCCSQDNCNSPAPRPTPALTLVFLTSLAGLGLWLLH.

The first 18 residues, 1 to 18 (MRALLLLSLSALLCWVSA), serve as a signal peptide directing secretion. The UPAR/Ly6 domain occupies 20–111 (IRCHSCYKLP…PRPTPALTLV (92 aa)). 3 cysteine pairs are disulfide-bonded: cysteine 22–cysteine 47, cysteine 25–cysteine 33, and cysteine 39–cysteine 65. Residue asparagine 88 is glycosylated (N-linked (GlcNAc...) asparagine). Cysteine 92 and cysteine 97 form a disulfide bridge. Residue serine 99 is the site of GPI-anchor amidated serine attachment. A propeptide spans 100–125 (PAPRPTPALTLVFLTSLAGLGLWLLH) (removed in mature form).

Post-translationally, N-glycosylated.

The protein resides in the cell membrane. This Bos taurus (Bovine) protein is Lymphocyte antigen 6 complex locus protein G6c (LY6G6C).